A 209-amino-acid polypeptide reads, in one-letter code: Lipopolysaccharide export system protein LptC (209 aa).

A helical transmembrane segment spans residues 7–26; it reads NIRWNVILGVIALCALAWFY.

Belongs to the LptC family. As to quaternary structure, component of the lipopolysaccharide transport and assembly complex. Interacts with LptA and the LptBFG transporter complex.

Its subcellular location is the cell inner membrane. In terms of biological role, involved in the assembly of lipopolysaccharide (LPS). Required for the translocation of LPS from the inner membrane to the outer membrane. Facilitates the transfer of LPS from the inner membrane to the periplasmic protein LptA. Could be a docking site for LptA. The sequence is that of Lipopolysaccharide export system protein LptC from Haemophilus influenzae (strain ATCC 51907 / DSM 11121 / KW20 / Rd).